We begin with the raw amino-acid sequence, 1097 residues long: MNGLKREHESSSSQDGSKTPETEYDSHVDSIEDIHSLASKRKKLNEKKENLEDLTLLKTSAFELKLNELIREISVRGKYFRHANTFVEKIKDLIFKTPVIPETNFWSACKNLEKDKKVIVPLAEPLSAKDTNLRASFVPPKTVTPGIFSCSNKFFLNPDGWSYDLFLEIPESIFTQKDYLNGRYFRKRAFYLTCIAKHLLENLGNEVKLEFVAFNDDIRRPILAILPESKGFAATGKRFTVFLIPTVRQIFPVSKLLPHKNAIRDFMEHEELKPTPFYNNSVLEEQNLLFYRDLVKKYSVNPQFLDACGLGSTWLNMRGFSSSIHSNGFGLLEWYVLMALLMSSTGLPAGNVLNTYLTAAQFFKSMLQFLSSKNLTSTLFKLNADSSNLKIGNGHLPTLIDCNTGFNLLGKMKQSFFEYFQASCRHTLNLLDENANYNFSKIFITHVNVPALEFDVSGCIPLEPKELEDPNFCRKTDLDSPYSLYLEYTWDLLQHALGDRVCQIILYSSICTSCSINESLKTKLPKLISFGLLLNPDALLRLVDIGPSPDDTVGSQKFREFWGEVSELRKFKNGSIAESVYWECSSPDERIRIPQRIIRHILNRHLGNNVGDRVSFRNEKFRVYVHSKISPNTDTYNEYVPVMEAYNEAVKSLINLSDIPLSIAEILPADESLRYSSSSVPFYESSTCAPIDVVFQFESSSKWPDELEGIQRTKIAFLLKIAELLEALDNVERASVGLENTDNPTHNCCFLQVLFSNNFTFRYRLRNDREIFFWKSLERNPSTKLSAQKGLYAYEHMFQFIPRHTLAIQAICQAHRSYSMAVRLAKHWFYSHLLTDHVTDEVIELLVASVYINSSSWRTTSSGETSFCRMLHFLAHWDWRFDPLIINSNGKLPHDVRHQATEKLESIRKQDVAIAHNAYYIITDYDFDGNHIGYYKPSKIIANRITSLARASLSELLKDTPNYKSIFKSSLDIYHVVIDVNINKLPMYRESNLTKYKNLQNMSSERPGFEPITEFVKELHRCFEDTISFFYNKKNPKVVTGVFNPRILANRPYRTNIDYPFKVVDKDTVVLDADVVCEEIRQVGGDLIRSIQLQLKA.

Basic and acidic residues-rich tracts occupy residues 1-10 (MNGLKREHES) and 18-27 (KTPETEYDSH). The segment at 1–27 (MNGLKREHESSSSQDGSKTPETEYDSH) is disordered.

It belongs to the NRAP family. As to quaternary structure, component of the ribosomal small subunit (SSU) processome.

Its subcellular location is the nucleus. It is found in the nucleolus. Functionally, involved in nucleolar processing of pre-18S ribosomal RNA and ribosome assembly. In Schizosaccharomyces pombe (strain 972 / ATCC 24843) (Fission yeast), this protein is U3 small nucleolar RNA-associated protein 22.